A 267-amino-acid chain; its full sequence is UPF0246 protein Dshi_3333 (267 aa).

It belongs to the UPF0246 family.

This is UPF0246 protein Dshi_3333 from Dinoroseobacter shibae (strain DSM 16493 / NCIMB 14021 / DFL 12).